Here is a 394-residue protein sequence, read N- to C-terminus: Protein TsgA homolog (394 aa).

12 helical membrane passes run 11 to 31 (WISF…GMVM), 51 to 71 (FLNA…EIVP), 78 to 98 (FGFV…SIAL), 101 to 121 (VSMF…TFLI), 134 to 154 (LLFT…VAAV), 162 to 182 (WYWV…LTFG), 206 to 226 (IGVL…LGFI), 250 to 270 (FWMS…FFDL), 273 to 293 (ILTV…NGAP), 297 to 317 (AWFI…IITL), 332 to 352 (FVLT…GPIV), and 361 to 381 (LQTA…LGFV).

This sequence belongs to the major facilitator superfamily. TsgA family.

It is found in the cell inner membrane. The chain is Protein TsgA homolog from Enterobacter sp. (strain 638).